Here is a 94-residue protein sequence, read N- to C-terminus: DNA gyrase subunit A (94 aa).

The region spanning Leu-35–Ala-94 is the Topo IIA-type catalytic domain.

The protein belongs to the type II topoisomerase GyrA/ParC subunit family. Heterotetramer, composed of two GyrA and two GyrB chains. In the heterotetramer, GyrA contains the active site tyrosine that forms a transient covalent intermediate with DNA, while GyrB binds cofactors and catalyzes ATP hydrolysis.

It localises to the cytoplasm. It carries out the reaction ATP-dependent breakage, passage and rejoining of double-stranded DNA.. Its function is as follows. A type II topoisomerase that negatively supercoils closed circular double-stranded (ds) DNA in an ATP-dependent manner to modulate DNA topology and maintain chromosomes in an underwound state. Negative supercoiling favors strand separation, and DNA replication, transcription, recombination and repair, all of which involve strand separation. Also able to catalyze the interconversion of other topological isomers of dsDNA rings, including catenanes and knotted rings. Type II topoisomerases break and join 2 DNA strands simultaneously in an ATP-dependent manner. The chain is DNA gyrase subunit A from Staphylococcus epidermidis.